We begin with the raw amino-acid sequence, 662 residues long: Polyunsaturated fatty acid lipoxygenase ALOX15 (662 aa).

The PLAT domain maps to 2 to 114; sequence GLYRIRVSTG…VLSLPEGTGR (113 aa). A Lipoxygenase domain is found at 115 to 662; that stretch reads TVGEDPQGLF…PSVVENSVAI (548 aa). Fe cation is bound by residues His360, His365, His540, His544, and Ile662.

The protein belongs to the lipoxygenase family. As to quaternary structure, interacts with PEBP1; in response to IL13/interleukin-13, prevents the interaction of PEBP1 with RAF1 to activate the ERK signaling cascade. It depends on Fe cation as a cofactor. In terms of tissue distribution, detected in monocytes and eosinophils (at protein level). Expressed in airway epithelial cells.

The protein localises to the cytoplasm. It localises to the cytosol. It is found in the cell membrane. Its subcellular location is the lipid droplet. The enzyme catalyses (5Z,8Z,11Z,14Z)-eicosatetraenoate + O2 = (12S)-hydroperoxy-(5Z,8Z,10E,14Z)-eicosatetraenoate. It catalyses the reaction (5Z,8Z,11Z,14Z)-eicosatetraenoate + O2 = (15S)-hydroperoxy-(5Z,8Z,11Z,13E)-eicosatetraenoate. The catalysed reaction is (9Z,12Z)-octadecadienoate + O2 = (13S)-hydroperoxy-(9Z,11E)-octadecadienoate. It carries out the reaction (5Z,8Z,11Z,14Z)-eicosatetraenoate + 2 O2 = (14R,15S)-dihydroperoxy-(5Z,8Z,10E,12E)-eicosatetraenoate. The enzyme catalyses (5Z,8Z,11Z,14Z)-eicosatetraenoate + 2 O2 = (8S,15S)-dihydroperoxy-(5Z,9E,11Z,13E)-eicosatetraenoate. It catalyses the reaction (14S,15R)-epoxy-(5Z,8Z,11Z)-eicosatrienoate + O2 = (8S)-hydroperoxy-(14S,15R)-epoxy-(5Z,9E,11Z)-eicosatrienoate. The catalysed reaction is (14S,15R)-epoxy-(5Z,8Z,11Z)-eicosatrienoate + O2 = (12S)-hydroperoxy-(14S,15R)-epoxy-(5Z,8Z,10E)-eicosatrienoate. It carries out the reaction (14R,15S)-epoxy-(5Z,8Z,11Z)-eicosatrienoate + O2 = (5S)-hydroperoxy-(14R,15S)-epoxy-(6E,8Z,11Z)-eicosatrienoate. The enzyme catalyses (14R,15S)-epoxy-(5Z,8Z,11Z)-eicosatrienoate + O2 = (12S)-hydroperoxy-(14R,15S)-epoxy-(5Z,8Z,10E)-eicosatrienoate. It catalyses the reaction (15R)-hydroperoxy-(5Z,8Z,11Z,13E)-eicosatetraenoate = 15-oxo-(5Z,8Z,11Z,13E)-eicosatetraenoate + H2O. The catalysed reaction is (15S)-hydroperoxy-(5Z,8Z,11Z,13E)-eicosatetraenoate = (14S,15S)-epoxy-(5Z,8Z,10E,12E)-eicosatetraenoate + H2O. It carries out the reaction (12S)-hydroperoxy-(5Z,8Z,10E,14Z)-eicosatetraenoate = (8S)-hydroxy-(11S,12S)-epoxy-(5Z,9E,14Z)-eicosatrienoate. The enzyme catalyses (4Z,7Z,10Z,13Z,16Z,19Z)-docosahexaenoate + O2 = (14S)-hydroperoxy-(4Z,7Z,10Z,12E,16Z,19Z)-docosahexaenoate. It catalyses the reaction (4Z,7Z,10Z,13Z,16Z,19Z)-docosahexaenoate + O2 = (17S)-hydroperoxy-(4Z,7Z,10Z,13Z,15E,19Z)-docosahexaenoate. The catalysed reaction is (7S)-hydroperoxy-(4Z,8E,10Z,13Z,16Z,19Z)-docosahexaenoate + O2 = (7S,14S)-dihydroperoxy-(4Z,8E,10Z,12E,16Z,19Z)-docosahexaenoate. It carries out the reaction (7S)-hydroperoxy-(4Z,8E,10Z,13Z,16Z,19Z)-docosahexaenoate + O2 = (7S,17S)-dihydroperoxy-(4Z,8E,10Z,13Z,15E,19Z)-docosahexaenoate. The enzyme catalyses (4Z,7Z,10Z,13Z,16Z,19Z)-docosahexaenoate + O2 = (11S)-hydroperoxy-(4Z,7Z,9E,13Z,16Z,19Z)-docosahexaenoate. It catalyses the reaction (7Z,10Z,13Z,16Z,19Z)-docosapentaenoate + O2 = 14-hydroperoxy-(7Z,10Z,12E,16Z,19Z)-docosapentaenoate. The catalysed reaction is (4Z,7Z,10Z,13Z,16Z)-docosapentaenoate + O2 = 14-hydroperoxy-(4Z,7Z,10Z,12E,16Z)-docosapentaenoate. It carries out the reaction N-(5Z,8Z,11Z,14Z)-eicosatetraenoyl-taurine + O2 = N-(12S)-hydroperoxy-(5Z,8Z,10E,14Z)-eicosatetraenoyl-taurine. The enzyme catalyses N-(5Z,8Z,11Z,14Z)-eicosatetraenoyl-gamma-aminobutanoate + O2 = N-(12S)-hydroperoxy-(5Z,8Z,10E,14Z)-eicosatetraenoyl-gamma-aminobutanoate. It catalyses the reaction N-(5Z,8Z,11Z,14Z)-eicosatetraenoyl-glycine + O2 = N-(12S)-hydroperoxy-(5Z,8Z,10E,14Z)-eicosatetraenoyl-glycine. The catalysed reaction is N-(5Z,8Z,11Z,14Z)-eicosatetraenoyl-L-alanine + O2 = N-(12S)-hydroperoxy-(5Z,8Z,10E,14Z)-eicosatetraenoyl-alanine. It carries out the reaction N-(5Z,8Z,11Z,14Z)-eicosatetraenoyl-taurine + O2 = N-(15S)-hydroperoxy-(5Z,8Z,11Z,13E)-eicosatetraenoyl-taurine. The enzyme catalyses N-(5Z,8Z,11Z,14Z)-eicosatetraenoyl-gamma-aminobutanoate + O2 = N-(15S)-hydroperoxy-(5Z,8Z,11Z,13E)-eicosatetraenoyl-gamma-aminobutanoate. It catalyses the reaction N-(5Z,8Z,11Z,14Z)-eicosatetraenoyl-glycine + O2 = N-(15S)-hydroperoxy-(5Z,8Z,11Z,13E)-eicosatetraenoyl-glycine. The catalysed reaction is N-(5Z,8Z,11Z,14Z)-eicosatetraenoyl-L-alanine + O2 = N-(15S)-hydroperoxy-(5Z,8Z,11Z,13E)-eicosatetraenoyl-alanine. The protein operates within lipid metabolism; hydroperoxy eicosatetraenoic acid biosynthesis. Activity is increased by binding phosphatidylinositol phosphates, especially phosphatidylinositol 3,4-bisphosphate and phosphatidylinositol 4,5-bisphosphate. Inactivated at 37 degrees Celsius by (13S)-hydroperoxy-(9Z,11E)-octadecadienoate. Functionally, non-heme iron-containing dioxygenase that catalyzes the stereo-specific peroxidation of free and esterified polyunsaturated fatty acids generating a spectrum of bioactive lipid mediators. It inserts peroxyl groups at C12 or C15 of arachidonate ((5Z,8Z,11Z,14Z)-eicosatetraenoate) producing both 12-hydroperoxyeicosatetraenoate/12-HPETE and 15-hydroperoxyeicosatetraenoate/15-HPETE. It may then act on 12-HPETE to produce hepoxilins, which may show pro-inflammatory properties. Can also peroxidize linoleate ((9Z,12Z)-octadecadienoate) to 13-hydroperoxyoctadecadienoate/13-HPODE. May participate in the sequential oxidations of DHA ((4Z,7Z,10Z,13Z,16Z,19Z)-docosahexaenoate) to generate specialized pro-resolving mediators (SPMs)like resolvin D5 ((7S,17S)-diHPDHA) and (7S,14S)-diHPDHA, that actively down-regulate the immune response and have anti-aggregation properties with platelets. Can convert epoxy fatty acids to hydroperoxy-epoxides derivatives followed by an intramolecular nucleophilic substitution leading to the formation of monocyclic endoperoxides. Plays an important role during the maintenance of self-tolerance by peroxidizing membrane-bound phosphatidylethanolamine which can then signal the sorting process for clearance of apoptotic cells during inflammation and prevent an autoimmune response. In addition to its role in the immune and inflammatory responses, this enzyme may play a role in epithelial wound healing in the cornea through production of lipoxin A4 (LXA(4)) and docosahexaenoic acid-derived neuroprotectin D1 (NPD1; 10R,17S-HDHA), both lipid autacoids exhibit anti-inflammatory and neuroprotective properties. Furthermore, it may regulate actin polymerization which is crucial for several biological processes such as the phagocytosis of apoptotic cells. It is also implicated in the generation of endogenous ligands for peroxisome proliferator activated receptor (PPAR-gamma), hence modulating macrophage development and function. It may also exert a negative effect on skeletal development by regulating bone mass through this pathway. As well as participates in ER stress and downstream inflammation in adipocytes, pancreatic islets, and liver. Finally, it is also involved in the cellular response to IL13/interleukin-13. This is Polyunsaturated fatty acid lipoxygenase ALOX15 from Homo sapiens (Human).